The chain runs to 78 residues: Gas vesicle protein A (78 aa).

The tract at residues 9–19 (LAEVLDRVLDK) is alpha helix 1. The segment at 23-31 (VDVWARISL) is beta-strand 1. The beta turn stretch occupies residues 32-34 (VGI). A beta-strand 2 region spans residues 35–43 (EILTVEARV). The segment at 48–67 (VDTFLHYAEEIAKIEQAELT) is alpha helix 2.

Belongs to the gas vesicle GvpA family. As to quaternary structure, the gas vesicle shell is 2 nm thick and consists of a single layer of this protein. It forms helical ribs nearly perpendicular to the long axis of the vesicle. Modeled as antiparallel homodimers.

It localises to the gas vesicle shell. Gas vesicles are hollow, gas filled proteinaceous nanostructures found in some microorganisms. During planktonic growth they allow positioning of the organism at a favorable depth for light or nutrient acquisition. GvpA forms the protein shell. This gene replaces p-gvpA of H.salinarum very poorly, only about 1% of GVs are formed; the few gas vesicles formed are quite strong with a very high critical collapse pressure (CCP) of 0.213 MPa. Functionally, expression of a 9.5 kb mc-vac DNA fragment containing 2 divergently transcribed regions (gvpD-gvpE-gvpF-gvpG-gvpH-gvpI-gvpJ-gvpK-gvpL-gvpM and gvpA-gvpC-gvpN-gvpO) allows H.volcanii to produce gas vesicles. This Haloferax mediterranei (strain ATCC 33500 / DSM 1411 / JCM 8866 / NBRC 14739 / NCIMB 2177 / R-4) (Halobacterium mediterranei) protein is Gas vesicle protein A.